The primary structure comprises 514 residues: Vacuolar aminopeptidase 1 (514 aa).

A propeptide spans 1 to 45 (required for vacuolar localization. Mediates aggregation and vesicle formation in Cvt pathway); sequence MEEQREILEQLKKTLQMLTVEPSKNNQIANEEKEKKENENSWCIL. Asn107 and Asn110 each carry an N-linked (GlcNAc...) asparagine glycan. His132 contacts Zn(2+). His210 provides a ligand contact to substrate. Zn(2+) contacts are provided by Asp303, Glu339, and Glu340. Glu339 provides a ligand contact to substrate. Residue Ser356 is modified to Phosphoserine. Asp385 is a Zn(2+) binding site. Positions 385 and 388 each coordinate substrate. An N-linked (GlcNAc...) asparagine glycan is attached at Asn448. Residue His479 participates in Zn(2+) binding.

It belongs to the peptidase M18 family. Homododecamer. The precursor form of aminopeptidase 1 (prApe1) assembles into dodecamers and further aggregates into higher multimers (the Ape1 complex) in the cytoplasm. The Ape1 complex is disaggregated in the vacuolar lumen, but mature aminopeptidase 1 (mApe1) retains its dodecameric form. Dodecamer assembly in the cytoplasm is essential for formation of an enzymatically active complex. If cytoplasmic homododecamerization of prApe1 is disturbed in mutants, homododecamers of mApe1 will form in the vacuole, but they are enzymatically inactive. Interacts with ATG19. Zn(2+) serves as cofactor. In terms of processing, synthesized in a precursor form (prApe1) that has an amino-terminal propeptide. The N-terminal extension of the 61 kDa precursor is proteolytically processed in two sequential steps. The first step involves proteinase A (PrA/PEP4) and produces a 55 kDa unstable intermediate (iAPI). The second step involves proteinase B (PrB/PRB1) and converts iAPI into the 50 kDa stable, mature enzyme (mApe1).

The protein localises to the vacuole. It catalyses the reaction Release of an N-terminal amino acid, preferably a neutral or hydrophobic one, from a polypeptide. Aminoacyl-arylamides are poor substrates.. With respect to regulation, strongly and specifically activated by Cl(-) and Br(-), which act as positive allosteric effectors. Inactivated by metal-chelating agents. Its function is as follows. Resident vacuolar enzyme that catalyzes the removal of amino acids from the N-terminus of peptides and proteins. Also acts as the major cargo protein of the cytoplasm-to-vacuole targeting (Cvt) pathway. The precursor form of aminopeptidase 1 (prApe1) assembles into dodecamers and the propeptide mediates the aggregation of dodecamers into higher multimers. The multimers are then recognized via the propeptide by their receptor ATG19, and ATG19 further interacts with ATG11, which tethers the APE1-ATG19 complex to the pre-autophagosomal structure (PAS). The cargo-receptor complex (also Cvt complex) is selectively enwrapped by a double-membrane structure termed the Cvt vesicle under vegetative growth conditions and by a similar but larger double-membrane structure termed the autophagosome under nitrogen starvation conditions. The Cvt vesicle or the autophagosome fuses with the vacuolar membrane and release its content in the vacuolar lumen. In the vacuole, prApe1 is processed into mature aminopeptidase 1 (mApe1). The protein is Vacuolar aminopeptidase 1 of Saccharomyces cerevisiae (strain ATCC 204508 / S288c) (Baker's yeast).